The primary structure comprises 517 residues: T-complex protein 11-like protein 2 (517 aa).

Positions 1-59 (MPFNGEKQYVNEDQQSDSESSRFSESTASLSDYGCSRQSFTSDSSSKSSSPASTSPPRG) are disordered. At Ser16 the chain carries Phosphoserine. Residues 17 to 55 (DSESSRFSESTASLSDYGCSRQSFTSDSSSKSSSPASTS) show a composition bias toward low complexity.

This sequence belongs to the TCP11 family. In terms of assembly, interacts with FMNL2; this interaction promotes muscle-derived satellite cell (MDSC) migration and differentiation.

It localises to the cytoplasm. The protein resides in the cytoskeleton. Functionally, promotes the migration of muscle-derived satellite cells (MDSCs) during differentiation throught interaction with FMNL2 and therefore may participate in microfilament assembly. The protein is T-complex protein 11-like protein 2 of Rattus norvegicus (Rat).